A 1400-amino-acid polypeptide reads, in one-letter code: MNQEVMNLFNPQAPAQTFDSIRISIASPEKILSWSYGEIKKPETINYRTFKPERDGLFCARIFGPIKDYECLCGKYKRMKYKGIICEKCGVEVTLSRVRRERMGHIELAAPVAHIWFLKSLPSRIGTLLDMTLKDIERVLYFENYIVTEPGLTSLKEHQLLSEEEYMIAVDEFGEDQFTALIGAEAIYELLASMELEKIAADLRVDLAETTSDLKQKKLMKRLKIVENFLESGNRPEWMIMKIVPVIPPDLRPLVPLDGGRFATSDLNDLYRRVINRNNRLKRLIELRAPGIIIRNEKRMLQEAVDALFDNGRRGRVITGANKRPLKSLSDMLKGKQGRFRQNLLGKRVDYSGRSVIVTGPELKLHQCGLPKKMALELFKPFIYARLDAKGYSSTVKQAKKLVEKERPEVWDILDEVIREHPVLLNRAPTLHRLGIQAFEPTLIEGKAIQLHPLVCTAFNADFDGDQMAVHVPLSLEAQLEARVLMMSTNNILHPANGAPIIVPSQDMVLGLYYLSIVAEKEPGEGMIFADMGELQHALENKVVTLHTKIKSRFKTVDAEGNPVSKIYDTTPGRMIMGELLPKNVNVPFDICNQEMTKKNISKMIDHVYRHCGQKETVIFCDRIMQLGFAHACRAGISFGKDDMVIPESKAKIVAETEALTTEYEQQYNDGLITQGEKYNKVVDAWGKATDKITEEMMARLKAVEFDPVTGRQKQMNSVYMMSHSGARGSVNQMRQLGGMRGLMAKPSGEIIETPIISNFKEGLTVNEYFNSTHGARKGLADTALKTANSGYLTRRLVDVAQDAIISEVDCGAEIGLTMQPIVDAGQIVASIGQRVLGRTALDPILHPVTGEVIVEAGRMIEEKDVEIIEKAGIQSIRIRSALTCETRDGVCAKCYGRDLARGTPVNQGEAVGVIAAQSIGEPGTQLTMRTFHLGGTAQVVDSSYLEASYEGTVKLRNRNVVRNSDGNLVVMGRNMAVLILDATGKERAVHRVTYGSRLFVDEGDTVKRGQRIAEWDPYTRPIMTEVEGYVEFEDLVDGLSVSETADESTGITKRVVIDWRSTPRGSDLKPAMVIKDKAGKILKLSKGGDARFLLSVESILSVEPGAHVKAGDVIARLPMESAKTKDITGGLPRVAELFEARRPKDHAIIAEIDGTVRFGRDYKNKRRIIIEPNDDTIEPVEYLIPKGKPFHLQDGDVIEKGEYILDGNPAPHDILAIKGVEALASYLVNEIQEVYRLQGVLINDKHIEVIVRQMLQKVEITESGDTGYIPGDHVDRIELEEINERLIEEGKKPGSGNPVLLGITKASLQTPSFISAASFQETTRVLTEAAVAGKMDTLQGLKENVIVGRLIPAGTGGMTNQIRRIATARDELIIDERRKTSGSAEANAMLVDMTNNAAE.

Positions 71, 73, 86, and 89 each coordinate Zn(2+). Positions 462, 464, and 466 each coordinate Mg(2+). Residues Cys-811, Cys-885, Cys-892, and Cys-895 each coordinate Zn(2+).

It belongs to the RNA polymerase beta' chain family. As to quaternary structure, the RNAP catalytic core consists of 2 alpha, 1 beta, 1 beta' and 1 omega subunit. When a sigma factor is associated with the core the holoenzyme is formed, which can initiate transcription. It depends on Mg(2+) as a cofactor. Requires Zn(2+) as cofactor.

It carries out the reaction RNA(n) + a ribonucleoside 5'-triphosphate = RNA(n+1) + diphosphate. Its function is as follows. DNA-dependent RNA polymerase catalyzes the transcription of DNA into RNA using the four ribonucleoside triphosphates as substrates. The chain is DNA-directed RNA polymerase subunit beta' from Brucella canis (strain ATCC 23365 / NCTC 10854 / RM-666).